Reading from the N-terminus, the 431-residue chain is F-box/kelch-repeat protein At4g19930 (431 aa).

Residues 37-83 (HEPMPYIPFDLVIEILTRLPAKSLMRFKSVSKLWSSLICSRTFTNRL) enclose the F-box domain. 2 Kelch repeats span residues 143 to 189 (LSHV…KNKK) and 227 to 275 (WVFI…PMLV).

The sequence is that of F-box/kelch-repeat protein At4g19930 from Arabidopsis thaliana (Mouse-ear cress).